We begin with the raw amino-acid sequence, 242 residues long: DNA-directed RNA polymerase III subunit rpc5 (242 aa).

Disordered stretches follow at residues 1–22 and 153–172; these read MSFS…TEEQ and LKAA…PRGP. Over residues 155-172 the composition is skewed to low complexity; the sequence is AAAGPSNSSSGTSTPRGP.

In terms of assembly, component of the RNA polymerase III (Pol III) complex consisting of 17 subunits.

Its subcellular location is the cytoplasm. The protein localises to the nucleus. DNA-dependent RNA polymerase catalyzes the transcription of DNA into RNA using the four ribonucleoside triphosphates as substrates. Specific peripheric component of RNA polymerase III which synthesizes small RNAs, such as 5S rRNA and tRNAs. The RPC53/RPC4-RPC37/RPC5 subcomplex is required for terminator recognition and reinitiation. This Schizosaccharomyces pombe (strain 972 / ATCC 24843) (Fission yeast) protein is DNA-directed RNA polymerase III subunit rpc5 (rpc37).